The primary structure comprises 407 residues: Cell division protein FtsZ (407 aa).

GTP contacts are provided by residues 18-22, 105-107, glutamate 136, arginine 140, and aspartate 184; these read GGGVN and GTG. A disordered region spans residues 312–407; sequence FDGGQPPARR…EELDVPDFLK (96 aa). Composition is skewed to low complexity over residues 336–348 and 368–377; these read AAPARSSAESTRP and APATASGESS. A compositionally biased stretch (pro residues) spans 381 to 390; it reads VSPPHVPPAR. A compositionally biased stretch (acidic residues) spans 396–407; it reads QAEELDVPDFLK.

It belongs to the FtsZ family. In terms of assembly, homodimer. Polymerizes to form a dynamic ring structure in a strictly GTP-dependent manner. Interacts directly with several other division proteins.

Its subcellular location is the cytoplasm. Its function is as follows. Essential cell division protein that forms a contractile ring structure (Z ring) at the future cell division site. The regulation of the ring assembly controls the timing and the location of cell division. One of the functions of the FtsZ ring is to recruit other cell division proteins to the septum to produce a new cell wall between the dividing cells. Binds GTP and shows GTPase activity. This is Cell division protein FtsZ from Streptomyces griseus.